The chain runs to 185 residues: Ribosome-recycling factor (185 aa).

Belongs to the RRF family.

The protein resides in the cytoplasm. Its function is as follows. Responsible for the release of ribosomes from messenger RNA at the termination of protein biosynthesis. May increase the efficiency of translation by recycling ribosomes from one round of translation to another. The protein is Ribosome-recycling factor of Clavibacter sepedonicus (Clavibacter michiganensis subsp. sepedonicus).